Reading from the N-terminus, the 859-residue chain is Linoleate 9S-lipoxygenase 1 (859 aa).

One can recognise a PLAT domain in the interval 21-161 (VKGTVVLMKK…HYTTDRVFFS (141 aa)). One can recognise a Lipoxygenase domain in the interval 164–859 (TYLPHETPAT…GRGIPNSVSI (696 aa)). The segment at 213 to 246 (KNPRPVLGGTQEYPYPRRGRTGRKPTKEDPQTES) is disordered. Positions 519, 524, 711, 715, and 859 each coordinate Fe cation.

Belongs to the lipoxygenase family. Monomer. It depends on Fe cation as a cofactor. Seedlings, roots, leaves, and flowers (at protein level). Expressed in guard cells.

Its subcellular location is the cytoplasm. It catalyses the reaction (9Z,12Z)-octadecadienoate + O2 = (9S)-hydroperoxy-(10E,12Z)-octadecadienoate. The catalysed reaction is (9Z,12Z,15Z)-octadecatrienoate + O2 = (9S)-hydroperoxy-(10E,12Z,15Z)-octadecatrienoate. The protein operates within lipid metabolism; oxylipin biosynthesis. Functionally, 9S-lipoxygenase that can use linoleic acid or linolenic acid as substrates. Plant lipoxygenases may be involved in a number of diverse aspects of plant physiology including growth and development, pest resistance, and senescence or responses to wounding. Catalyzes the hydroperoxidation of lipids containing a cis,cis-1,4-pentadiene structure. Function as regulators of root development by controlling the emergence of lateral roots. 9S-lypoxygenase-derived oxylipins may play an antagonistic role to ethylene signaling in the control of responses involving oxidative stress, lipid peroxidation and plant defense. LOX1-derived oxylipins may be involved in stress signaling from roots to shoots in response to cadmium exposure. 9S-lypoxygenase-derived oxylipins are engaged during infection to control the balance between salicylic acid (SA) and jasmonate (JA) signaling to facilitate infection by the fungal pathogen Fusarium graminearum. 9S-lypoxygenase-derived oxylipins activate brassinosteroid signaling to promote cell wall-based defense and limit pathogen infection. The LOX1-derived compound (9S)-hydroperoxy-(10E,12Z,15Z)-octadecatrienoate protects plant tissues against infection by the bacterial pathogen Pseudomonas syringae pv tomato DC3000. The LOX1-derived oxylipins are required to trigger stomatal closure in response to both infection by the bacterial pathogen Pseudomonas syringae pv tomato DC3000, and the pathogen-associated molecular pattern (PAMP) flagellin peptide flg22. Contributes to the oxidation of free fatty acids during seed aging. This is Linoleate 9S-lipoxygenase 1 from Arabidopsis thaliana (Mouse-ear cress).